The sequence spans 332 residues: Ketol-acid reductoisomerase (NADP(+)) (332 aa).

The region spanning 1–182 (MATIYYEKDA…GCTRAGVLAT (182 aa)) is the KARI N-terminal Rossmann domain. Residues 25 to 28 (YGSQ), Arg-48, Ser-53, and 83 to 86 (DELQ) each bind NADP(+). His-108 is an active-site residue. Gly-134 is an NADP(+) binding site. In terms of domain architecture, KARI C-terminal knotted spans 183–328 (TFKEETETDL…KELRSMMPWL (146 aa)). Mg(2+) is bound by residues Asp-191, Glu-195, Glu-227, and Glu-231. Residue Ser-252 coordinates substrate.

It belongs to the ketol-acid reductoisomerase family. It depends on Mg(2+) as a cofactor.

The enzyme catalyses (2R)-2,3-dihydroxy-3-methylbutanoate + NADP(+) = (2S)-2-acetolactate + NADPH + H(+). It carries out the reaction (2R,3R)-2,3-dihydroxy-3-methylpentanoate + NADP(+) = (S)-2-ethyl-2-hydroxy-3-oxobutanoate + NADPH + H(+). It participates in amino-acid biosynthesis; L-isoleucine biosynthesis; L-isoleucine from 2-oxobutanoate: step 2/4. The protein operates within amino-acid biosynthesis; L-valine biosynthesis; L-valine from pyruvate: step 2/4. Involved in the biosynthesis of branched-chain amino acids (BCAA). Catalyzes an alkyl-migration followed by a ketol-acid reduction of (S)-2-acetolactate (S2AL) to yield (R)-2,3-dihydroxy-isovalerate. In the isomerase reaction, S2AL is rearranged via a Mg-dependent methyl migration to produce 3-hydroxy-3-methyl-2-ketobutyrate (HMKB). In the reductase reaction, this 2-ketoacid undergoes a metal-dependent reduction by NADPH to yield (R)-2,3-dihydroxy-isovalerate. This Methanocella arvoryzae (strain DSM 22066 / NBRC 105507 / MRE50) protein is Ketol-acid reductoisomerase (NADP(+)).